Here is a 224-residue protein sequence, read N- to C-terminus: MMAAQPTIREVLFNPVFQNNPIGLQILGICSALAVTSNLKTATVMAIALTLVTGFSNLFISMIRRQIPSSIRMIVQMVIIASLVIVVDQVLKAYAYSLSKQLSVFVGLIITNCIVMGRAEAFAMANPPLVSFFDGIGNGLGYSAMLLVLGFVRELFGAGKLYGISVLPTVNDGGWYQPNGLLLLPPSAFFLIGLIIWALRTWKKDQVEAPTYKMAPQVSSKEAY.

5 consecutive transmembrane segments (helical) span residues 43-63 (TVMAIALTLVTGFSNLFISMI), 67-87 (IPSSIRMIVQMVIIASLVIVV), 104-124 (VFVGLIITNCIVMGRAEAFAM), 132-152 (FFDGIGNGLGYSAMLLVLGFV), and 179-199 (NGLLLLPPSAFFLIGLIIWAL).

The protein belongs to the NqrDE/RnfAE family. In terms of assembly, composed of six subunits; NqrA, NqrB, NqrC, NqrD, NqrE and NqrF.

The protein resides in the cell inner membrane. It carries out the reaction a ubiquinone + n Na(+)(in) + NADH + H(+) = a ubiquinol + n Na(+)(out) + NAD(+). In terms of biological role, NQR complex catalyzes the reduction of ubiquinone-1 to ubiquinol by two successive reactions, coupled with the transport of Na(+) ions from the cytoplasm to the periplasm. NqrA to NqrE are probably involved in the second step, the conversion of ubisemiquinone to ubiquinol. The sequence is that of Na(+)-translocating NADH-quinone reductase subunit D from Pseudomonas aeruginosa (strain LESB58).